Here is a 213-residue protein sequence, read N- to C-terminus: Ras-related protein Rab-25 (213 aa).

Residues serine 21, glycine 24, lysine 25, threonine 26, asparagine 27, serine 38, histidine 39, threonine 43, and threonine 44 each coordinate GTP. Threonine 26 contacts Mg(2+). Short sequence motifs (switch) lie at residues 35-49 and 67-84; these read NEFS…GVEF and DTAG…YYRG. Residues threonine 44 and aspartate 67 each coordinate Mg(2+). Residues glycine 70, asparagine 125, lysine 126, aspartate 128, alanine 156, and leucine 157 each coordinate GTP. Residues cysteine 209 and cysteine 210 are each lipidated (S-geranylgeranyl cysteine). Cysteine 210 bears the Cysteine methyl ester mark. The propeptide at 211–213 is removed in mature form; the sequence is ISL.

This sequence belongs to the small GTPase superfamily. Rab family. As to quaternary structure, interacts (GTP-bound form) with RAB11FIP1, RAB11FIP2, RAB11FIP3 and RAB11FIP4. Interacts (via the hypervariable C-terminal region) with ITGB1 (via the cytoplasmic region); the interaction is GTP-dependent. Interacts with ITGAV. Associates with the integrin alpha-V/beta-1 heterodimer. Interacts with VPS33B. Mg(2+) serves as cofactor. In terms of tissue distribution, expression is restricted to epithelial cells. Expressed in ovarian epithelium (NOE) and breast tissue. Expressed in ovarian cancer; expression is increased relative to NOE cells. Expression in ovarian cancer is stage dependent, with stage III and stage IV showing higher levels than early stage cancers. Expressed in breast cancer; expression is increased relative to normal breast tissue.

The protein localises to the cell membrane. Its subcellular location is the cytoplasmic vesicle. It localises to the cell projection. It is found in the pseudopodium membrane. It catalyses the reaction GTP + H2O = GDP + phosphate + H(+). Regulated by guanine nucleotide exchange factors (GEFs) which promote the exchange of bound GDP for free GTP. Regulated by GTPase activating proteins (GAPs) which increase the GTP hydrolysis activity. Inhibited by GDP dissociation inhibitors (GDIs) which prevent Rab-GDP dissociation. Its function is as follows. The small GTPases Rab are key regulators of intracellular membrane trafficking, from the formation of transport vesicles to their fusion with membranes. Rabs cycle between an inactive GDP-bound form and an active GTP-bound form that is able to recruit to membranes different set of downstream effectors directly responsible for vesicle formation, movement, tethering and fusion. RAB25 regulates epithelial cell differentiation, proliferation and survival, thereby playing key roles in tumorigenesis. Promotes invasive migration of cells in which it functions to localize and maintain integrin alpha-V/beta-1 at the tips of extending pseudopodia. Involved in the regulation of epithelial morphogenesis through the control of CLDN4 expression and localization at tight junctions. May selectively regulate the apical recycling pathway. Together with MYO5B regulates transcytosis. The polypeptide is Ras-related protein Rab-25 (Homo sapiens (Human)).